Reading from the N-terminus, the 415-residue chain is Levansucrase LscA (415 aa).

Residues Trp45, Asp46, Ala132, Arg202, and Asp203 each contribute to the sucrose site. Asp46 functions as the Nucleophile in the catalytic mechanism. Glu287 acts as the Proton donor/acceptor in catalysis.

This sequence belongs to the glycosyl hydrolase 68 family.

The protein resides in the periplasm. The enzyme catalyses [6)-beta-D-fructofuranosyl-(2-&gt;](n) alpha-D-glucopyranoside + sucrose = [6)-beta-D-fructofuranosyl-(2-&gt;](n+1) alpha-D-glucopyranoside + D-glucose. Catalyzes the synthesis of levan, a fructose polymer, by transferring the fructosyl moiety from sucrose to a growing acceptor molecule. LscA encodes a functional enzyme in vitro, when expressed in E.coli under control of the vector-based lactose promoter (Plac), and it can restore levan production to the lscB-lscC double mutant. However, lscA is not expressed in P.savastanoi pv. glycinea PG4180 under standard conditions. It could be an ancestral Lsc variant in P.syringae. This chain is Levansucrase LscA, found in Pseudomonas savastanoi pv. glycinea (Pseudomonas syringae pv. glycinea).